Reading from the N-terminus, the 207-residue chain is Fibroblast growth factor 18 (207 aa).

Residues M1–A27 form the signal peptide. N-linked (GlcNAc...) asparagine glycosylation is present at N39. A disulfide bridge connects residues C109 and C127. An N-linked (GlcNAc...) asparagine glycan is attached at N137.

Belongs to the heparin-binding growth factors family. As to quaternary structure, interacts with FGFR3 and FGFR4.

It localises to the secreted. In terms of biological role, plays an important role in the regulation of cell proliferation, cell differentiation and cell migration. Required for normal ossification and bone development. Stimulates hepatic and intestinal proliferation. This is Fibroblast growth factor 18 (FGF18) from Bos taurus (Bovine).